The sequence spans 242 residues: uncharacterized protein (242 aa).

Residues 57-67 show a composition bias toward polar residues; the sequence is SPTSQKTSASG. The tract at residues 57 to 78 is disordered; that stretch reads SPTSQKTSASGQEEPDPLHDKS. One can recognise a DUF1279 domain in the interval 76–188; that stretch reads DKSSGLIQRF…GYMSTPPPVK (113 aa). A helical transmembrane segment spans residues 92–114; it reads YGKVMIPVHLLTSTMWFGTFYYA. Residues 188-237 are a coiled coil; it reads KEYLQEKMEETKERISGKMEETKDRFSERMEETKDKFNEKLQETKDKVSF. The segment covering 198–236 has biased composition (basic and acidic residues); that stretch reads TKERISGKMEETKDRFSERMEETKDKFNEKLQETKDKVS. A disordered region spans residues 198–242; the sequence is TKERISGKMEETKDRFSERMEETKDKFNEKLQETKDKVSFRKKKE.

It is found in the membrane. This is an uncharacterized protein from Danio rerio (Zebrafish).